Consider the following 387-residue polypeptide: Migration and invasion-inhibitory protein (387 aa).

Positions 50 to 59 (NLEMPLSQET) are enriched in polar residues. Disordered stretches follow at residues 50-80 (NLEM…DPLD) and 133-172 (VSLG…SAVP). A compositionally biased stretch (low complexity) spans 60–69 (SSASSVAPSS). Basic and acidic residues predominate over residues 70–80 (QDKRHMLDPLD). Ser307 carries the phosphoserine modification.

Interacts with IGFBP2.

In terms of biological role, inhibits glioma cells invasion and down-regulates adhesion- and motility-associated genes such as NFKB2 and ICAM1. Exhibits opposing effects to IGFBP2 on cell invasion. This chain is Migration and invasion-inhibitory protein (Miip), found in Mus musculus (Mouse).